Reading from the N-terminus, the 513-residue chain is Tryptophan--tRNA ligase 1 (513 aa).

A 'HIGH' region motif is present at residues 86–94 (PTGDPHIGH). A 'KMSKS' region motif is present at residues 393 to 397 (KMSSS).

This sequence belongs to the class-I aminoacyl-tRNA synthetase family.

The protein localises to the cytoplasm. The enzyme catalyses tRNA(Trp) + L-tryptophan + ATP = L-tryptophyl-tRNA(Trp) + AMP + diphosphate + H(+). The polypeptide is Tryptophan--tRNA ligase 1 (Halobacterium salinarum (strain ATCC 700922 / JCM 11081 / NRC-1) (Halobacterium halobium)).